Here is a 1427-residue protein sequence, read N- to C-terminus: Protein expanded (1427 aa).

Residues 26–399 form the FERM domain; sequence RFLALRLLGQ…DTHQWSMKLA (374 aa). The disordered stretch occupies residues 176 to 212; it reads GDAPPGTSNSKDDSGEETSASPSNGGRGLSATTTLPK. Residues 192-211 are compositionally biased toward polar residues; the sequence is ETSASPSNGGRGLSATTTLP. Phosphotyrosine occurs at positions 227 and 423. Disordered stretches follow at residues 520–566 and 611–656; these read VRPQ…IGSQ and NSAL…SGVY. Over residues 524-544 the composition is skewed to polar residues; it reads DASSNGATIVTNSSVQRNSMG. A compositionally biased stretch (low complexity) spans 545-559; sequence TTANDSSTATDSPSS. Tyr-679 carries the post-translational modification Phosphotyrosine. The segment covering 688–710 has biased composition (basic and acidic residues); that stretch reads EETHVQHSDSVDGKKKEDFRPRS. 5 disordered regions span residues 688-732, 766-792, 815-880, 939-963, and 1000-1022; these read EETH…DNKH, YVTL…YSAR, APKP…SLKS, HNSN…HRHS, and LAPP…HPHL. Tyr-766 is subject to Phosphotyrosine. The span at 818 to 838 shows a compositional bias: pro residues; the sequence is PDSPPCSPPVPPAPIPAPPPA. The RXPPXY motif signature appears at 842-847; it reads RDPPPY. The span at 848-859 shows a compositional bias: polar residues; it reads SISSKPRPTSLI. The segment covering 860 to 877 has biased composition (low complexity); that stretch reads SVSSSAHPAPSAAGSMSS. Basic residues predominate over residues 951-963; the sequence is LHHHHVPSHHRHS. Positions 1001 to 1019 are enriched in pro residues; sequence APPPPSLPRQPPPPPPPNH. The short motif at 1008-1020 is the SH3-binding element; it reads PRQPPPPPPPNHP. Tyr-1103 is subject to Phosphotyrosine. The SH3-binding motif lies at 1149–1157; that stretch reads PPPPPPLHP. Ser-1181 carries the post-translational modification Phosphoserine. Disordered stretches follow at residues 1190–1267 and 1345–1398; these read DLLP…WAGE and TGQE…LPVQ. Pro residues-rich tracts occupy residues 1214–1230 and 1237–1246; these read PPMP…PSKP and PIPPRKPPTL. 2 stretches are compositionally biased toward polar residues: residues 1253-1262 and 1345-1370; these read SPLTKTSSGA and TGQE…SSAG. Residues 1376–1388 show a composition bias toward basic residues; the sequence is KARKGSTVSHRHP.

Forms a complex with Kibra and Mer. Interacts (via RXPPXY motif) with Kibra (via domain WW 1). Interacts with Mer and Hpo (via SARAH domain). Interacts with Schip1; the interaction results in recruitment of Schip1 to the apical cell membrane. Interacts with ack and yki. In terms of processing, phosphorylated by Ack at several tyrosines including Tyr-227, Tyr-423, Tyr-679, Tyr-766 and Tyr-1103.

The protein localises to the apical cell membrane. In terms of biological role, activates the Hippo/SWH (Sav/Wts/Hpo) signaling pathway, a signaling pathway that plays a pivotal role in organ size control and tumor suppression by restricting proliferation and promoting apoptosis. The core of this pathway is composed of a kinase cascade wherein Hippo (Hpo), in complex with its regulatory protein Salvador (Sav), phosphorylates and activates Warts (Wts) in complex with its regulatory protein Mats, which in turn phosphorylates and inactivates the Yorkie (Yki) oncoprotein. Ex acts synergistically along with Mer and Kibra to regulate the Hippo signaling pathway. Involved in the control of cell proliferation in imaginal disks. May bind to certain proteins of signal transduction pathways by interaction with their SH3 domains. Required for apical localization of Schip1. In Drosophila melanogaster (Fruit fly), this protein is Protein expanded (ex).